The primary structure comprises 322 residues: MSIDPANDSKLAPEANDATLGDVDRWIEQLKKCEPLSEADVEMLCDKAREVLCQENNVQPVRNPVTVCGDIHGQFHDLMELFKIGGDVPDMNYLFMGDYVDRGYHSVETVSLLVAMKLRYPNRITILRGNHESRQITQVYGFYDECLRKYGSANVWKHFTNLFDYFPLTALIEDRIFCLHGGLSPSIDSLDHVRTLDRVQEVPHEGPMCDLLWSDPDDRCGWGISPRGAGYTFGQDISETFNHANGLSLTARAHQLVMEGFNWAHDGDVVTIFSAPNYCYRCGNQAAILEVDDTMNQVFLQFDPAPREGEPVIARRTPDYFL.

Residues Asp70, His72, Asp98, and Asn130 each contribute to the Mn(2+) site. The active-site Proton donor is His131. Mn(2+) contacts are provided by His180 and His254. Residue Leu322 is modified to Leucine methyl ester.

It belongs to the PPP phosphatase family. PP-2A subfamily. It depends on Mn(2+) as a cofactor.

The catalysed reaction is O-phospho-L-seryl-[protein] + H2O = L-seryl-[protein] + phosphate. The enzyme catalyses O-phospho-L-threonyl-[protein] + H2O = L-threonyl-[protein] + phosphate. In terms of biological role, essential role in cell cycle control. PP2A may be involved in controlling the entry into mitosis, possibly acting as an inhibitor. This chain is Major serine/threonine-protein phosphatase PP2A-2 catalytic subunit (ppa2), found in Schizosaccharomyces pombe (strain 972 / ATCC 24843) (Fission yeast).